Reading from the N-terminus, the 305-residue chain is Glutaminase (305 aa).

S61, N113, E158, N165, Y189, Y241, and V259 together coordinate substrate.

It belongs to the glutaminase family. As to quaternary structure, homotetramer.

The enzyme catalyses L-glutamine + H2O = L-glutamate + NH4(+). The protein is Glutaminase of Alkaliphilus oremlandii (strain OhILAs) (Clostridium oremlandii (strain OhILAs)).